A 478-amino-acid chain; its full sequence is Sulfate adenylyltransferase subunit 1 (478 aa).

Residues 24-240 (KSMLRFLTCG…VLEDIDIDAD (217 aa)) form the tr-type G domain. The segment at 33 to 40 (GSVDDGKS) is G1. GTP is bound at residue 33–40 (GSVDDGKS). Positions 91 to 95 (GITID) are G2. The interval 112–115 (DTPG) is G3. GTP-binding positions include 112–116 (DTPGH) and 167–170 (NKMD). Residues 167–170 (NKMD) form a G4 region. Residues 206–208 (SAL) form a G5 region.

Belongs to the TRAFAC class translation factor GTPase superfamily. Classic translation factor GTPase family. CysN/NodQ subfamily. Heterodimer composed of CysD, the smaller subunit, and CysN.

It catalyses the reaction sulfate + ATP + H(+) = adenosine 5'-phosphosulfate + diphosphate. Its pathway is sulfur metabolism; hydrogen sulfide biosynthesis; sulfite from sulfate: step 1/3. With CysD forms the ATP sulfurylase (ATPS) that catalyzes the adenylation of sulfate producing adenosine 5'-phosphosulfate (APS) and diphosphate, the first enzymatic step in sulfur assimilation pathway. APS synthesis involves the formation of a high-energy phosphoric-sulfuric acid anhydride bond driven by GTP hydrolysis by CysN coupled to ATP hydrolysis by CysD. The sequence is that of Sulfate adenylyltransferase subunit 1 from Aliivibrio salmonicida (strain LFI1238) (Vibrio salmonicida (strain LFI1238)).